The chain runs to 317 residues: Single myb histone 6 (317 aa).

One can recognise an HTH myb-type domain in the interval 1–61; sequence MGAPKQRWTS…KWRNMNVIVS (61 aa). The segment at residues 28 to 57 is a DNA-binding region (H-T-H motif); the sequence is WRTILKDPEFSSTLCYRSNVDLKDKWRNMN. Positions 121-189 constitute an H15 domain; the sequence is KSHRLDNIIM…KVNRKYRIAP (69 aa). Residues 244–288 are a coiled coil; the sequence is VAAARAVAEAEAIMAEAEAAAKEAEAAEAEAQAAQAFAEAAFLTL.

It belongs to the histone H1/H5 family. SMH subfamily. In terms of assembly, forms a homodimer and heterodimers.

The protein localises to the nucleus. Its subcellular location is the chromosome. It is found in the nucleolus. The protein resides in the telomere. Functionally, binds preferentially double-stranded telomeric repeats, but may also bind to the single telomeric strand. In Zea mays (Maize), this protein is Single myb histone 6 (SMH6).